A 513-amino-acid chain; its full sequence is ATP synthase subunit alpha (513 aa).

ATP is bound at residue 169-176; sequence GDRQTGKT.

It belongs to the ATPase alpha/beta chains family. F-type ATPases have 2 components, CF(1) - the catalytic core - and CF(0) - the membrane proton channel. CF(1) has five subunits: alpha(3), beta(3), gamma(1), delta(1), epsilon(1). CF(0) has three main subunits: a(1), b(2) and c(9-12). The alpha and beta chains form an alternating ring which encloses part of the gamma chain. CF(1) is attached to CF(0) by a central stalk formed by the gamma and epsilon chains, while a peripheral stalk is formed by the delta and b chains.

The protein resides in the cell inner membrane. The catalysed reaction is ATP + H2O + 4 H(+)(in) = ADP + phosphate + 5 H(+)(out). Produces ATP from ADP in the presence of a proton gradient across the membrane. The alpha chain is a regulatory subunit. The protein is ATP synthase subunit alpha of Cronobacter sakazakii (strain ATCC BAA-894) (Enterobacter sakazakii).